The sequence spans 398 residues: Streptopain (398 aa).

The first 27 residues, 1–27, serve as a signal peptide directing secretion; sequence MNKKKLGIRLLSLLALGGFVLANPVFA. A propeptide spanning residues 28–145 is cleaved from the precursor; sequence DQNFARNEKE…TTYAGTAEIK (118 aa). The active-site Nucleophile is C192. The residue at position 192 (C192) is a Cysteine methyl disulfide; in zymogen form. Residues S282 and G339 each coordinate a protein. H340 (proton acceptor) is an active-site residue. The tract at residues 368 to 390 is C-terminal active site loop; it reads RLDALNPSALGTGGGAGGFNGYQ.

This sequence belongs to the peptidase C10 family. Monomer. In terms of processing, the mature protease is derived from the precursor sequence by cleavage, either in cis via an autocatalytic mechanism, or in trans by mature SpeB or host proteases (trypsin, plasmin or subtilisin). Maturation can involve a number of protein cleavage intermediates. Mature SpeB probably plays the most important role in protein maturation in physiological conditions. Post-translationally, methylthiolation at Cys-192 of the inactive zymogen form is probably involved in the mechanism of secretion of the proteinase into the culture fluid.

It is found in the secreted. It localises to the host extracellular space. The protein resides in the host cytoplasm. It carries out the reaction Preferential cleavage with hydrophobic residues at P2, P1 and P1'.. Synthesized as an inactive zymogen to protect the intracellular components of the bacteria from proteolytic activity during protein production. Once secreted into the extracellular milieu, cleaved into the active protease: maturation can be mediated in cis by autocatalytic cleavage, or in trans by mature SpeB or host proteases. Protease activity is strongly inhibited by zinc and copper, which prevent its maturation into an active protease: inhibition by metal ions may be required to prevent proteolysis of streptococcal proteins. Functionally, cysteine protease that acts as a key streptococcal virulence factor by cleaving host proteins involved in immune response. Triggers inflammation by mediating cleavage of host proteins, which can both promote host pathogenesis by triggering sterile inflammation and/or restrict streptococcal infection, depending on host immune statue and infection site. Cleaves host gasdermin-A (GSDMA) in epithelial cells, promoting GSDMA activation and formation of gasdermin pores, triggering pyroptosis. Pyroptosis triggers the elimination of the infected skin cell, depriving the pathogen of its protective niche, while inducing an inflammatory response. This ultimately prevents bacterial penetration of the epithelial barrier and a subsequent systemic dissemination of the pathogen. Also mediates cleavage of the cytokine precursor interleukin-1 beta (IL1B) to its mature form, resulting in inflammation and septic shock. SpeB-mediated maturation of IL1B plays a dual role depending on infection site: while IL1B inflammatory response prevents bacterial growth during invasive skin infections, it promotes streptococcal infection of the nasopharynx by disrupting colonization resistance mediated by the microbiota. Inhibits host autophagy be catalyzing cleavage and inactivation of key autophagy factors, such as CALCOCO2, NBR1 and SQSTM1. Cleaves and inhibits a number of complement factors, such as C2, C3-beta chain of C3, C4, C5 or SERPING1, thereby promoting evasion of host immunity. May also impair adaptive immunity by catalyzing cleavage and degradation of host immunoglobulins to promote immune system evasion; the relevance of this activity is however unsure in vivo. Catalyzes maturation and release of the peptide hormone bradykinin from the precursor Kininogen-1 (KNG1) to produce hypotension during septic shock. Also involved in bacterial translocation across the host epithelial barrier by mediating cleavage and degradation of host epithelial junction proteins, such as CDH1 and OCLN. Additionally, has been involved in degradation of fibronectin and vitronectin, two host extracellular matrix proteins involved in tissue integrity. Also able to catalyze cleavage and degradation of streptococcal proteins, such as C5a peptidase, EndoS or SmeZ. Degradation of streptococcal proteins is however strictly regulated to preserve integrity of other virulence factors. The protein is Streptopain (speB) of Streptococcus pyogenes serotype M3 (strain ATCC BAA-595 / MGAS315).